The chain runs to 429 residues: Bifunctional phosphoribosylaminoimidazole carboxylase/phosphoribosylaminoimidazole succinocarboxamide synthetase (429 aa).

The SAICAR synthetase stretch occupies residues 7-264 (ASIEGYKLGK…WVAEQLADIV (258 aa)). The SAICAR synthetase domain stretch occupies residues 7–264 (ASIEGYKLGK…WVAEQLADIV (258 aa)). Residues 265–429 (PKKDHLVVIL…DKELRGVRNA (165 aa)) form an AIR carboxylase region. The segment at 270 to 429 (LVVILMGSAS…DKELRGVRNA (160 aa)) is AIR carboxylase domain. Ser335 contributes to the CO2 binding site.

It in the N-terminal section; belongs to the SAICAR synthetase family. This sequence in the C-terminal section; belongs to the AIR carboxylase family. Class II subfamily. As to quaternary structure, homooctamer.

It carries out the reaction 5-amino-1-(5-phospho-D-ribosyl)imidazole-4-carboxylate + L-aspartate + ATP = (2S)-2-[5-amino-1-(5-phospho-beta-D-ribosyl)imidazole-4-carboxamido]succinate + ADP + phosphate + 2 H(+). It catalyses the reaction 5-amino-1-(5-phospho-D-ribosyl)imidazole-4-carboxylate + H(+) = 5-amino-1-(5-phospho-beta-D-ribosyl)imidazole + CO2. The protein operates within purine metabolism; IMP biosynthesis via de novo pathway; 5-amino-1-(5-phospho-D-ribosyl)imidazole-4-carboxamide from 5-amino-1-(5-phospho-D-ribosyl)imidazole-4-carboxylate: step 1/2. It participates in purine metabolism; IMP biosynthesis via de novo pathway; 5-amino-1-(5-phospho-D-ribosyl)imidazole-4-carboxylate from 5-amino-1-(5-phospho-D-ribosyl)imidazole (carboxylase route): step 1/1. Functionally, bifunctional phosphoribosylaminoimidazole carboxylase and phosphoribosylaminoimidazole succinocarboxamide synthetase catalyzing two reactions of the de novo purine biosynthetic pathway. The chain is Bifunctional phosphoribosylaminoimidazole carboxylase/phosphoribosylaminoimidazole succinocarboxamide synthetase from Drosophila melanogaster (Fruit fly).